The following is a 325-amino-acid chain: tRNA dimethylallyltransferase (325 aa).

17-24 provides a ligand contact to ATP; it reads GPTASGKT. 19 to 24 provides a ligand contact to substrate; it reads TASGKT. Interaction with substrate tRNA stretches follow at residues 42–45, 166–170, 251–256, and 284–291; these read DSAL, QRIQR, RCVGYR, and KRQITWLR.

Belongs to the IPP transferase family. In terms of assembly, monomer. Mg(2+) is required as a cofactor.

It carries out the reaction adenosine(37) in tRNA + dimethylallyl diphosphate = N(6)-dimethylallyladenosine(37) in tRNA + diphosphate. In terms of biological role, catalyzes the transfer of a dimethylallyl group onto the adenine at position 37 in tRNAs that read codons beginning with uridine, leading to the formation of N6-(dimethylallyl)adenosine (i(6)A). The polypeptide is tRNA dimethylallyltransferase (Burkholderia multivorans (strain ATCC 17616 / 249)).